Consider the following 363-residue polypeptide: Dihydroorotate dehydrogenase (quinone) (363 aa).

FMN contacts are provided by residues 77–81 (AGMDK) and threonine 101. Substrate is bound at residue lysine 81. Substrate is bound at residue 126-130 (NRMGF). 2 residues coordinate FMN: serine 155 and asparagine 188. Asparagine 188 is a binding site for substrate. Residue serine 191 is the Nucleophile of the active site. Asparagine 193 lines the substrate pocket. 2 residues coordinate FMN: lysine 234 and threonine 262. 263–264 (NT) is a binding site for substrate. Residues glycine 287, glycine 316, and 337–338 (YT) contribute to the FMN site.

It belongs to the dihydroorotate dehydrogenase family. Type 2 subfamily. In terms of assembly, monomer. The cofactor is FMN.

Its subcellular location is the cell membrane. It carries out the reaction (S)-dihydroorotate + a quinone = orotate + a quinol. It functions in the pathway pyrimidine metabolism; UMP biosynthesis via de novo pathway; orotate from (S)-dihydroorotate (quinone route): step 1/1. Catalyzes the conversion of dihydroorotate to orotate with quinone as electron acceptor. The sequence is that of Dihydroorotate dehydrogenase (quinone) from Chloroflexus aurantiacus (strain ATCC 29366 / DSM 635 / J-10-fl).